A 239-amino-acid polypeptide reads, in one-letter code: Ribosomal RNA small subunit methyltransferase G (239 aa).

S-adenosyl-L-methionine-binding positions include G78, F83, A129–E130, and R148.

The protein belongs to the methyltransferase superfamily. RNA methyltransferase RsmG family.

It is found in the cytoplasm. Specifically methylates the N7 position of a guanine in 16S rRNA. The polypeptide is Ribosomal RNA small subunit methyltransferase G (Clostridium botulinum (strain Okra / Type B1)).